The sequence spans 184 residues: Ubiquitin-conjugating enzyme E2-23 kDa (184 aa).

In terms of domain architecture, UBC core spans 1-148 (MSSPSKRREM…VKEYCERYAK (148 aa)). C85 (glycyl thioester intermediate) is an active-site residue. A disordered region spans residues 146-184 (YAKPEDISPEEEEEESDEELSDAEGYDSGDEAIMGHADP). Positions 152 to 175 (ISPEEEEEESDEELSDAEGYDSGD) are enriched in acidic residues.

The protein belongs to the ubiquitin-conjugating enzyme family.

It catalyses the reaction S-ubiquitinyl-[E1 ubiquitin-activating enzyme]-L-cysteine + [E2 ubiquitin-conjugating enzyme]-L-cysteine = [E1 ubiquitin-activating enzyme]-L-cysteine + S-ubiquitinyl-[E2 ubiquitin-conjugating enzyme]-L-cysteine.. It participates in protein modification; protein ubiquitination. Catalyzes the covalent attachment of ubiquitin to other proteins. This chain is Ubiquitin-conjugating enzyme E2-23 kDa (UBC4), found in Triticum aestivum (Wheat).